A 910-amino-acid chain; its full sequence is UPF0182 protein Acid_6445 (910 aa).

The next 7 membrane-spanning stretches (helical) occupy residues isoleucine 17–alanine 37, leucine 56–isoleucine 76, leucine 101–valine 121, leucine 157–alanine 177, phenylalanine 210–glycine 229, isoleucine 252–alanine 272, and tryptophan 276–valine 296.

Belongs to the UPF0182 family.

The protein localises to the cell membrane. The protein is UPF0182 protein Acid_6445 of Solibacter usitatus (strain Ellin6076).